The sequence spans 485 residues: Protein nucleotidyltransferase YdiU (485 aa).

Positions 90, 92, 93, 113, 125, 126, 176, and 183 each coordinate ATP. The active-site Proton acceptor is the Asp252. The Mg(2+) site is built by Asn253 and Asp262. Asp262 contributes to the ATP binding site.

Belongs to the SELO family. It depends on Mg(2+) as a cofactor. The cofactor is Mn(2+).

The enzyme catalyses L-seryl-[protein] + ATP = 3-O-(5'-adenylyl)-L-seryl-[protein] + diphosphate. The catalysed reaction is L-threonyl-[protein] + ATP = 3-O-(5'-adenylyl)-L-threonyl-[protein] + diphosphate. It carries out the reaction L-tyrosyl-[protein] + ATP = O-(5'-adenylyl)-L-tyrosyl-[protein] + diphosphate. It catalyses the reaction L-histidyl-[protein] + UTP = N(tele)-(5'-uridylyl)-L-histidyl-[protein] + diphosphate. The enzyme catalyses L-seryl-[protein] + UTP = O-(5'-uridylyl)-L-seryl-[protein] + diphosphate. The catalysed reaction is L-tyrosyl-[protein] + UTP = O-(5'-uridylyl)-L-tyrosyl-[protein] + diphosphate. In terms of biological role, nucleotidyltransferase involved in the post-translational modification of proteins. It can catalyze the addition of adenosine monophosphate (AMP) or uridine monophosphate (UMP) to a protein, resulting in modifications known as AMPylation and UMPylation. The polypeptide is Protein nucleotidyltransferase YdiU (Aliivibrio fischeri (strain ATCC 700601 / ES114) (Vibrio fischeri)).